Reading from the N-terminus, the 197-residue chain is Dephospho-CoA kinase (197 aa).

A DPCK domain is found at 2–197 (IIGITGGIAS…SALLSLANPR (196 aa)). 10–15 (ASGKST) contacts ATP.

Belongs to the CoaE family.

It localises to the cytoplasm. It carries out the reaction 3'-dephospho-CoA + ATP = ADP + CoA + H(+). It functions in the pathway cofactor biosynthesis; coenzyme A biosynthesis; CoA from (R)-pantothenate: step 5/5. Functionally, catalyzes the phosphorylation of the 3'-hydroxyl group of dephosphocoenzyme A to form coenzyme A. The polypeptide is Dephospho-CoA kinase (Streptococcus pyogenes serotype M28 (strain MGAS6180)).